The sequence spans 205 residues: Iron-sulfur assembly protein 2 (205 aa).

Residues Cys-131, Cys-196, and Cys-198 each contribute to the Fe cation site.

This sequence belongs to the HesB/IscA family.

It is found in the mitochondrion matrix. Its function is as follows. Involved in the assembly of mitochondrial and cytoplasmic iron-sulfur proteins. Probably involved in the binding of an intermediate of Fe/S cluster assembly. In Schizosaccharomyces pombe (strain 972 / ATCC 24843) (Fission yeast), this protein is Iron-sulfur assembly protein 2 (isa2).